We begin with the raw amino-acid sequence, 300 residues long: 2-dehydropantoate 2-reductase (300 aa).

Residues 7 to 12 (GAGAIG), lysine 74, asparagine 99, and alanine 123 each bind NADP(+). The active-site Proton donor is lysine 179. Residues lysine 179, asparagine 183, asparagine 187, asparagine 197, and 246–249 (NYNS) each bind substrate. Glutamate 261 lines the NADP(+) pocket.

The protein belongs to the ketopantoate reductase family.

The protein localises to the cytoplasm. The enzyme catalyses (R)-pantoate + NAD(+) = 2-dehydropantoate + NADH + H(+). The catalysed reaction is (R)-pantoate + NADP(+) = 2-dehydropantoate + NADPH + H(+). It participates in cofactor biosynthesis; coenzyme A biosynthesis. Functionally, catalyzes the NAD(P)H-dependent reduction of ketopantoate into pantoic acid. In Pyrococcus abyssi (strain GE5 / Orsay), this protein is 2-dehydropantoate 2-reductase (apbA).